The chain runs to 311 residues: VQ motif-containing protein 9 (311 aa).

Residues Met-1–Thr-27 are compositionally biased toward low complexity. The segment at Met-1–His-78 is disordered. The VQ signature appears at Phe-90 to Gly-99. Disordered regions lie at residues His-103–Leu-125, Gln-228–Phe-266, and Gly-290–His-311. Positions Phe-240–Ser-249 are enriched in pro residues. Low complexity predominate over residues Gly-290 to Pro-302.

As to quaternary structure, interacts (via N-terminus) with WRKY8. As to expression, highly expressed in roots and at lower levels in rosette leaves, cauline leaves, stems, flowers and siliques.

It is found in the nucleus. Functionally, functions as a negative regulator of salt stress response. Functions as a repressor of WRKY8 transcription factor by decreasing the DNA-binding activity of WRKY8 and acts antagonistically with WRKY8 to regulate sodium and potassium homeostasis under salt stress. The protein is VQ motif-containing protein 9 of Arabidopsis thaliana (Mouse-ear cress).